The following is a 148-amino-acid chain: Azurin (148 aa).

Residues 1 to 18 (MRNQLLFALAFIPTIAAA) form the signal peptide. The Plastocyanin-like domain occupies 19-148 (ASNCEVNVSA…MMRGTVKLVD (130 aa)). An intrachain disulfide couples Cys-22 to Cys-45. Cu cation contacts are provided by His-65, Cys-131, His-136, and Met-140.

It is found in the periplasm. It functions in the pathway one-carbon metabolism; methylamine degradation. Its function is as follows. Probable electron acceptor for methylamine dehydrogenase. This is Azurin (azu) from Methylobacillus flagellatus (strain ATCC 51484 / DSM 6875 / VKM B-1610 / KT).